A 245-amino-acid polypeptide reads, in one-letter code: Homeobox protein Hox-A4a (245 aa).

The disordered stretch occupies residues 34–99 (DYYERPKDPG…HGPRLTTESC (66 aa)). A compositionally biased stretch (basic and acidic residues) spans 35–51 (YYERPKDPGFPHHEEAS). Polar residues-rich tracts occupy residues 53–73 (PRSN…NDLN) and 82–99 (QPQS…TESC). The Antp-type hexapeptide signature appears at 126 to 131 (VYPWMK). A DNA-binding region (homeobox) is located at residues 147-206 (PKRSRTAYTRQQALELEKEFHFNRYLTRRRRVEIAHTMCLSERQVKIWFQNRRMKWKKDH). A disordered region spans residues 205-245 (DHKLPNTKIRSSSSAPSNHHVKTDATQQQQTLLPTPCSSNL). The span at 212–221 (KIRSSSSAPS) shows a compositional bias: polar residues. Positions 230 to 245 (TQQQQTLLPTPCSSNL) are enriched in low complexity.

This sequence belongs to the Antp homeobox family. Deformed subfamily.

Its subcellular location is the nucleus. Functionally, sequence-specific transcription factor which is part of a developmental regulatory system that provides cells with specific positional identities on the anterior-posterior axis. The protein is Homeobox protein Hox-A4a (hoxa4a) of Danio rerio (Zebrafish).